The following is a 669-amino-acid chain: MSIRNIGIMAHIDAGKTTTTERIIYYTGKSHKMGDVDSGNTITDWMPQEQERGITISSAAITCHWKDCQINIIDTPGHVDFTAEVERSLRVLDGGIVIFSAVDGIQAQTETVWKQAEKYEIPRLAYVNKMDRIGADFFKVVGDIENKFKTIPLVLQIPIGNESNFEGVVDIILNKELHFSMENGIPKLTYSQIREEFIEKVILFKKKLIDILSQFSEEITQLFLEDKEIGLDIIKREIRRGTISRFIIPVLMGTSLKNIGIEPLIDSIVDYLPSPFEKSFSAFSLDTNKKILVDPNENKKLSALVFKVQYSSVIASHLYFVRVYSGEINPNKKIINASNGKREKFTKIFRVFSNKNEQIDFVKTGDIGAVLGLKFSVTGDTLVEENNNVLLEAVMFPEPVVLMSVEPERSSDEVRLKEIFEIISKEDPTFSYSESKETGQLIISGMGELHLEIILTRIKDEFNLNVYTGKPQVSYRESAGKIVKEVFEFNNIFAGKNIDFKIGMIIKPLSRGAGNKIDFECGIEPVIKSAILRGITSAFVSGIFGYPIIDINVSIFSIVCGANKISESAFESISGFAFHSIFQKSDPIRLEPIMLLEIRTPIEHTGEIISTLNVMGGVIHSVSNIGEYDLIKSEAAFEKLFGYASILRSSTKGRGSFTMEFSYFKEKLS.

The region spanning 1-276 (MSIRNIGIMA…SIVDYLPSPF (276 aa)) is the tr-type G domain. GTP is bound by residues 10–17 (AHIDAGKT), 74–78 (DTPGH), and 128–131 (NKMD).

The protein belongs to the TRAFAC class translation factor GTPase superfamily. Classic translation factor GTPase family. EF-G/EF-2 subfamily.

It localises to the cytoplasm. Functionally, catalyzes the GTP-dependent ribosomal translocation step during translation elongation. During this step, the ribosome changes from the pre-translocational (PRE) to the post-translocational (POST) state as the newly formed A-site-bound peptidyl-tRNA and P-site-bound deacylated tRNA move to the P and E sites, respectively. Catalyzes the coordinated movement of the two tRNA molecules, the mRNA and conformational changes in the ribosome. This Borreliella burgdorferi (strain ATCC 35210 / DSM 4680 / CIP 102532 / B31) (Borrelia burgdorferi) protein is Elongation factor G 2 (fusB).